Reading from the N-terminus, the 340-residue chain is Ribosomal RNA large subunit methyltransferase F (340 aa).

Belongs to the methyltransferase superfamily. METTL16/RlmF family.

The protein resides in the cytoplasm. The enzyme catalyses adenosine(1618) in 23S rRNA + S-adenosyl-L-methionine = N(6)-methyladenosine(1618) in 23S rRNA + S-adenosyl-L-homocysteine + H(+). Specifically methylates the adenine in position 1618 of 23S rRNA. The sequence is that of Ribosomal RNA large subunit methyltransferase F from Dechloromonas aromatica (strain RCB).